Consider the following 971-residue polypeptide: UPF0182 protein RER_22310 (971 aa).

The next 7 membrane-spanning stretches (helical) occupy residues 16-36, 61-81, 112-132, 172-192, 209-229, 257-277, and 286-306; these read ILLV…RLIG, FVLF…AMLL, LFGV…AQAN, WLFV…YVFG, VQLA…YWFD, AKLI…ASIF, and MAVA…PMIV. A disordered region spans residues 890-927; that stretch reads GSAATVTQPAPDPDTGAQPETPTTPTAPAPPASSDDVT.

This sequence belongs to the UPF0182 family.

It localises to the cell membrane. The protein is UPF0182 protein RER_22310 of Rhodococcus erythropolis (strain PR4 / NBRC 100887).